Reading from the N-terminus, the 124-residue chain is Small ribosomal subunit protein uS12 (124 aa).

Asp89 carries the post-translational modification 3-methylthioaspartic acid.

This sequence belongs to the universal ribosomal protein uS12 family. In terms of assembly, part of the 30S ribosomal subunit. Contacts proteins S8 and S17. May interact with IF1 in the 30S initiation complex.

In terms of biological role, with S4 and S5 plays an important role in translational accuracy. Its function is as follows. Interacts with and stabilizes bases of the 16S rRNA that are involved in tRNA selection in the A site and with the mRNA backbone. Located at the interface of the 30S and 50S subunits, it traverses the body of the 30S subunit contacting proteins on the other side and probably holding the rRNA structure together. The combined cluster of proteins S8, S12 and S17 appears to hold together the shoulder and platform of the 30S subunit. The chain is Small ribosomal subunit protein uS12 from Vibrio cholerae serotype O1 (strain ATCC 39315 / El Tor Inaba N16961).